The following is a 163-amino-acid chain: Jun dimerization protein 2 (163 aa).

Disordered stretches follow at residues 1–20 (MMPG…PGLG) and 59–89 (KRPQ…AARC). Lys65 is covalently cross-linked (Glycyl lysine isopeptide (Lys-Gly) (interchain with G-Cter in SUMO2)). The region spanning 72–135 (EERRKRRREK…QQLILMLNRH (64 aa)) is the bZIP domain. Residues 74 to 96 (RRKRRREKNKVAAARCRNKKKER) form a basic motif region. Positions 100 to 128 (LQRESERLELMNAELKTQIEELKLERQQL) are leucine-zipper. Thr148 carries the post-translational modification Phosphothreonine; by MAPK8.

The protein belongs to the bZIP family. ATF subfamily. In terms of assembly, forms a homodimer or heterodimer with JUN, JUNB, JUND, CEBPG and ATF2 thereby inhibiting transactivation by JUN, ATF2 and CEBPG. Binds multiple DNA elements such as cAMP-response element (CRE) and TPA response element (TRE) either as homodimer or heterodimer. Interacts with IRF2BP1. Phosphorylation of Thr-148 by MAPK8 in response to different stress conditions such as, UV irradiation, oxidatives stress and anisomycin treatments. In terms of processing, polyubiquitinated; probably by IRF2BP1. As to expression, ubiquitously expressed in all adult tissues tested as well in embryos.

It is found in the nucleus. Its function is as follows. Component of the AP-1 transcription factor that represses transactivation mediated by the Jun family of proteins. Involved in a variety of transcriptional responses associated with AP-1, such as UV-induced apoptosis, cell differentiation, tumorigenesis and antitumogeneris. Can also function as a repressor by recruiting histone deacetylase 3/HDAC3 to the promoter region of JUN. May control transcription via direct regulation of the modification of histones and the assembly of chromatin. This is Jun dimerization protein 2 (Jdp2) from Mus musculus (Mouse).